Consider the following 585-residue polypeptide: MCLLARVRHIEITPDVNGNMFFWHFQNKHIANKQRTVIWLNGGPGCSSEDGALMEIGPYRLKDKDTLVYNEGAWNEFANVLFVDNPVGTGFSYVDTNAYVRELDVMADQFVTFLEKWFKLFPEYEHDDIFIAGESYAGQYIPYIAKAILERNKKGGESSYKWNLAGLLIGNGWISPPEQYEAYLQFAYEKGIVKKGSDAASKLEVQQRICSKQLAVGPALVDNTDCEKILQDLLQLTATSKGGEQRCVNMYDVRLTDTYPSCGMNWPPDLDAVTPYLRRNDVIQALHVNPNKVTGWVECNGQVGANFKPSSKPSVELLPDLLKEVPIILFSGSEDLICNHLGTEALISNLQWNGGKGFEITPGTWAPRRDWTFEGEAAGFWQEARNLTYVVFYNSSHMVPFDYPRRTRDMLDRFMGVDISSIGGKPTDSRLDGEKVPETTVGGVAGNGTDAQQAEKEKLDTARWEAYRKSGEIVLVIVAFSAAGWGWWVWRERKKRRGYMGVSGGENISPSGEARGREGFRDKRSAADLEAGDFDENELDDLHMRTPTTVMGGEGNDPRYSVGAASEDSEDEEDVKGKGKEKMSG.

Residues 1–18 form the signal peptide; that stretch reads MCLLARVRHIEITPDVNG. Over 19–469 the chain is Lumenal; sequence NMFFWHFQNK…DTARWEAYRK (451 aa). Active-site residues include S135 and D335. N-linked (GlcNAc...) asparagine glycosylation is found at N386 and N394. H397 is an active-site residue. The N-linked (GlcNAc...) asparagine glycan is linked to N447. Residues 470–490 form a helical membrane-spanning segment; sequence SGEIVLVIVAFSAAGWGWWVW. The Cytoplasmic segment spans residues 491 to 585; sequence RERKKRRGYM…KGKGKEKMSG (95 aa). Residues 526-585 are disordered; it reads AADLEAGDFDENELDDLHMRTPTTVMGGEGNDPRYSVGAASEDSEDEEDVKGKGKEKMSG. The segment covering 530-539 has biased composition (acidic residues); the sequence is EAGDFDENEL. Over residues 575-585 the composition is skewed to basic and acidic residues; sequence VKGKGKEKMSG.

It belongs to the peptidase S10 family.

The protein localises to the golgi apparatus. The protein resides in the trans-Golgi network membrane. The enzyme catalyses Preferential release of a C-terminal arginine or lysine residue.. Functionally, protease with a carboxypeptidase B-like function involved in the C-terminal processing of the lysine and arginine residues from protein precursors. Promotes cell fusion and is involved in the programmed cell death. This chain is Pheromone-processing carboxypeptidase KEX1 (KEX1), found in Podospora anserina (strain S / ATCC MYA-4624 / DSM 980 / FGSC 10383) (Pleurage anserina).